The following is a 244-amino-acid chain: Uridylate kinase (244 aa).

K18–G21 lines the ATP pocket. G60 is a binding site for UMP. 2 residues coordinate ATP: G61 and R65. Residues D80 and T141 to T148 contribute to the UMP site. The ATP site is built by T168, Q169, Y174, and D177.

This sequence belongs to the UMP kinase family. Homohexamer.

It is found in the cytoplasm. The catalysed reaction is UMP + ATP = UDP + ADP. The protein operates within pyrimidine metabolism; CTP biosynthesis via de novo pathway; UDP from UMP (UMPK route): step 1/1. Inhibited by UTP. In terms of biological role, catalyzes the reversible phosphorylation of UMP to UDP. The chain is Uridylate kinase from Rickettsia typhi (strain ATCC VR-144 / Wilmington).